The sequence spans 269 residues: G-protein coupled receptor homolog C3 (269 aa).

A disulfide bridge connects residues cysteine 28 and cysteine 107. 5 helical membrane passes run 30-50, 71-91, 123-143, 165-185, and 200-220; these read IMSVLYYVGFFSNMFIITLMS, IGILMCCSAWLLSLILSSPVS, LMQIEITILGFLIPIIIFVYC, IVLMIVVCSLICWIPLYIVLM, and HLCLYLNLAYAITFSETISLA.

The protein belongs to the G-protein coupled receptor 1 family.

The protein localises to the host cell membrane. The sequence is that of G-protein coupled receptor homolog C3 from Sus scrofa (Pig).